Reading from the N-terminus, the 105-residue chain is Large ribosomal subunit protein uL24 (105 aa).

It belongs to the universal ribosomal protein uL24 family. Part of the 50S ribosomal subunit.

Functionally, one of two assembly initiator proteins, it binds directly to the 5'-end of the 23S rRNA, where it nucleates assembly of the 50S subunit. One of the proteins that surrounds the polypeptide exit tunnel on the outside of the subunit. The polypeptide is Large ribosomal subunit protein uL24 (Tolumonas auensis (strain DSM 9187 / NBRC 110442 / TA 4)).